A 535-amino-acid polypeptide reads, in one-letter code: NAD(P)H-quinone oxidoreductase chain 4 2 (535 aa).

14 helical membrane-spanning segments follow: residues 9–29, 51–71, 106–126, 130–150, 152–172, 184–204, 227–247, 258–278, 290–310, 326–346, 347–367, 399–419, 432–452, and 479–499; these read FPWL…IPLI, WFAL…FYVG, LILL…PVTL, LFYF…AVQD, LLFF…LSIW, FILY…AMAF, LLLY…FPLH, TAPV…YALM, LYFA…AALT, ISHM…GMSG, AMLQ…LVGA, LASL…VFIG, LVVV…LLSM, and VFII…PKLV.

It belongs to the complex I subunit 4 family.

It is found in the cellular thylakoid membrane. The catalysed reaction is a plastoquinone + NADH + (n+1) H(+)(in) = a plastoquinol + NAD(+) + n H(+)(out). The enzyme catalyses a plastoquinone + NADPH + (n+1) H(+)(in) = a plastoquinol + NADP(+) + n H(+)(out). NDH-1 shuttles electrons from NAD(P)H, via FMN and iron-sulfur (Fe-S) centers, to quinones in the respiratory chain. The immediate electron acceptor for the enzyme in this species is believed to be plastoquinone. Couples the redox reaction to proton translocation (for every two electrons transferred, four hydrogen ions are translocated across the cytoplasmic membrane), and thus conserves the redox energy in a proton gradient. The protein is NAD(P)H-quinone oxidoreductase chain 4 2 of Synechococcus sp. (strain JA-3-3Ab) (Cyanobacteria bacterium Yellowstone A-Prime).